The following is a 21-amino-acid chain: Conchiolin protein p20 (21 aa).

Residues 1–14 (YQRXSRYYYYXGPP) are compositionally biased toward low complexity. The disordered stretch occupies residues 1–21 (YQRXSRYYYYXGPPDDIDDRY).

It belongs to the N16 matrix protein family. As to quaternary structure, homooligomer; disulfide-linked. May also be disulfide-linked to insoluble organic matrix. Post-translationally, according to PubMed:11250534, amino acids 4 and 11 may be sulfated or phosphorylated. By similarity with the N14 matrix protein, amino-acid 4 may be a cysteine involved in a disulfide bond. In terms of tissue distribution, component of conchiolin, the organic matrix of nacre. Is dispersed in calcium carbonate and also linked by disulfide bonds to the organic core of nacre.

It localises to the secreted. The protein localises to the extracellular space. It is found in the extracellular matrix. Its function is as follows. May be specifically involved in the formation of the nacreous layer. The polypeptide is Conchiolin protein p20 (Pinctada maxima (Silver-lipped pearl oyster)).